A 208-amino-acid chain; its full sequence is Guanylate kinase (208 aa).

Residues 4-185 (GNLYILSAPS…ALADLVHILR (182 aa)) enclose the Guanylate kinase-like domain. Residue 11–18 (APSGAGKS) coordinates ATP.

The protein belongs to the guanylate kinase family.

The protein resides in the cytoplasm. It catalyses the reaction GMP + ATP = GDP + ADP. In terms of biological role, essential for recycling GMP and indirectly, cGMP. In Mannheimia succiniciproducens (strain KCTC 0769BP / MBEL55E), this protein is Guanylate kinase.